A 501-amino-acid polypeptide reads, in one-letter code: 1-aminocyclopropane-1-carboxylate synthase-like protein 1 (501 aa).

Glu-105 is a substrate binding site. The residue at position 323 (Lys-323) is an N6-(pyridoxal phosphate)lysine. The tract at residues Gly-480–Arg-501 is disordered. Over residues Pro-490–Arg-501 the composition is skewed to polar residues.

This sequence belongs to the class-I pyridoxal-phosphate-dependent aminotransferase family.

Its function is as follows. Does not catalyze the synthesis of 1-aminocyclopropane-1-carboxylate but is capable of catalyzing the deamination of L-vinylglycine. This chain is 1-aminocyclopropane-1-carboxylate synthase-like protein 1 (ACCS), found in Homo sapiens (Human).